The chain runs to 209 residues: Small ribosomal subunit protein uS3 (209 aa).

The 70-residue stretch at 38–107 folds into the KH type-2 domain; that stretch reads IRKVIKSKYA…RFIVNVEEIK (70 aa).

Belongs to the universal ribosomal protein uS3 family. As to quaternary structure, part of the 30S ribosomal subunit. Forms a tight complex with proteins S10 and S14.

Binds the lower part of the 30S subunit head. Binds mRNA in the 70S ribosome, positioning it for translation. In Thermosipho melanesiensis (strain DSM 12029 / CIP 104789 / BI429), this protein is Small ribosomal subunit protein uS3.